Here is a 490-residue protein sequence, read N- to C-terminus: Serine palmitoyltransferase 2 (490 aa).

A helical transmembrane segment spans residues 10–30 (VDDVGYLPILFLYIAYAFIIF). Residue lysine 321 is modified to N6-(pyridoxal phosphate)lysine.

It belongs to the class-II pyridoxal-phosphate-dependent aminotransferase family. As to quaternary structure, forms a heterodimer with sptA. Pyridoxal 5'-phosphate serves as cofactor.

The protein localises to the endoplasmic reticulum membrane. The enzyme catalyses L-serine + hexadecanoyl-CoA + H(+) = 3-oxosphinganine + CO2 + CoA. It functions in the pathway lipid metabolism; sphingolipid metabolism. Its function is as follows. Catalytic subunit of serine palmitoyltransferase (SPT), which catalyzes the committed step in the synthesis of sphingolipids, the condensation of serine with palmitoyl CoA to form the long chain base 3-ketosphinganine. This Dictyostelium discoideum (Social amoeba) protein is Serine palmitoyltransferase 2 (sptB).